The chain runs to 374 residues: Mitochondrial import inner membrane translocase subunit tim50 (374 aa).

A mitochondrion-targeting transit peptide spans 1-48; the sequence is MILNKVAKCYGKQIGFFGNKTTQFIKPNQTIFLIGGTKRLFTTQQQQS. The tract at residues 42 to 97 is disordered; that stretch reads TTQQQQSPKKEEPKSEQQKKVEDKTEEKEKEKDEEENENEKEKENEDGEGQKKKSK. Basic and acidic residues-rich tracts occupy residues 49–72 and 81–93; these read PKKE…KEKE and EKEK…EGQK. The chain crosses the membrane as a helical span at residues 103–125; it reads IVTSVTSTFFAGVLVASTFGYLT. The FCP1 homology domain occupies 191 to 332; the sequence is PGGKKYTLVI…IELLPVLESF (142 aa).

It belongs to the TIM50 family. In terms of assembly, component of the mitochondrial import inner membrane translocase complex.

It is found in the mitochondrion inner membrane. Its function is as follows. Component of the mitochondrial import inner membrane translocase that mediates the translocation of transit peptide-containing proteins across the mitochondrial inner membrane. This chain is Mitochondrial import inner membrane translocase subunit tim50 (timm50), found in Dictyostelium discoideum (Social amoeba).